The primary structure comprises 736 residues: MEIGTEISRKIRSAIKGKLQELGAYVDEELPDYIMVMVANKKSQDQMTEDLSLFLGNNTIRFTVWLHGVLDKLRSVTTEPSSLKSSDTNIFDSNVPSNKSNFSRGDERRHEAAVPPLAIPSARPEKRDSRVSTSSQESKTTNVRQTYDDGAATRLMSTVKPLREPAPSEDVIDIKPEPDDLIDEDLNFVQENPLSQKKPTVTLTYGSSRPSIEIYRPPASRNADSGVHLNRLQFQQQQNSIHAAKQLDMQSSWVYETGRLCEPEVLNSLEETYSPFFRNNSEKMSMEDENFRKRKLPVVSSVVKVKKFNHDGEEEEEDDDYGSRTGSISSSVSVPAKPERRPSLPPSKQANKNLILKAISEAQESVTKTTNYSTVPQKQTLPVAPRTRTSQEELLAEVVQGQSRTPRISPPIKEEETKGDSVEKNQGTQQRQLLSRLQIDPVMAETLQMSQDYYDMESMVHADTRSFILKKPKLSEEVVVAPNQESGMKTADSLRVLSGHLMQTRDLVQPDKPASPKFIVTLDGVPSPPGYMSDQEEDMCFEGMKPVNQTAASNKGLRGLLHPQQLHLLSRQLEDPNGSFSNAEMSELSVAQKPEKLLERCKYWPACKNGDECAYHHPISPCKAFPNCKFAEKCLFVHPNCKYDAKCTKPDCPFTHVSRRIPVLSPKPAVAPPAPPSSSQLCRYFPACKKMECPFYHPKHCRFNTQCTRPDCTFYHPTINVPPRHALKWIRPQTSE.

Methionine 1 carries the post-translational modification N-acetylmethionine. 2 stretches are compositionally biased toward polar residues: residues 77–103 (TTEP…SNFS) and 131–145 (VSTS…NVRQ). The disordered stretch occupies residues 77–145 (TTEPSSLKSS…QESKTTNVRQ (69 aa)). Position 85 is a phosphoserine (serine 85). Residues lysine 99, lysine 139, lysine 175, and lysine 198 each participate in a glycyl lysine isopeptide (Lys-Gly) (interchain with G-Cter in SUMO2) cross-link. The residue at position 240 (serine 240) is a Phosphoserine. Lysine 245 is covalently cross-linked (Glycyl lysine isopeptide (Lys-Gly) (interchain with G-Cter in SUMO2)). The residue at position 281 (serine 281) is a Phosphoserine. Glycyl lysine isopeptide (Lys-Gly) (interchain with G-Cter in SUMO2) cross-links involve residues lysine 283 and lysine 295. A disordered region spans residues 310–350 (HDGEEEEEDDDYGSRTGSISSSVSVPAKPERRPSLPPSKQA). Residues serine 327 and serine 343 each carry the phosphoserine modification. The residue at position 357 (lysine 357) is an N6-acetyllysine; alternate. A Glycyl lysine isopeptide (Lys-Gly) (interchain with G-Cter in SUMO2); alternate cross-link involves residue lysine 357. A Glycyl lysine isopeptide (Lys-Gly) (interchain with G-Cter in SUMO2) cross-link involves residue lysine 378. Residues serine 390 and serine 409 each carry the phosphoserine modification. Positions 398–430 (VVQGQSRTPRISPPIKEEETKGDSVEKNQGTQQ) are disordered. Residues 412-423 (IKEEETKGDSVE) are compositionally biased toward basic and acidic residues. Residue lysine 413 forms a Glycyl lysine isopeptide (Lys-Gly) (interchain with G-Cter in SUMO2) linkage. The residue at position 421 (serine 421) is a Phosphoserine. Residue lysine 489 forms a Glycyl lysine isopeptide (Lys-Gly) (interchain with G-Cter in SUMO2) linkage. Phosphoserine occurs at positions 498, 515, 527, and 620. C3H1-type zinc fingers lie at residues 595 to 620 (EKLL…HPIS), 621 to 640 (PCKA…VHPN), 641 to 656 (CKYD…PFTH), 682 to 699 (CRYF…YHPK), and 701 to 719 (CRFN…HPTI).

This sequence belongs to the ZC3H14 family. In terms of assembly, homodimer; facilitating circular RNAs (circRNAs) formation. Associates with the spliceosome. Interacts with HOOK2. Interacts with ZFC3H1 in a RNase-sensitive manner. In terms of tissue distribution, expressed in fetal and adult brain. Expressed in fetal and adult temporal lobe.

The protein resides in the nucleus speckle. It localises to the cytoplasm. Its function is as follows. RNA-binding protein involved in the biogenesis of circular RNAs (circRNAs), which are produced by back-splicing circularization of pre-mRNAs. Acts by binding to both exon-intron boundary and 3'-UTR of pre-mRNAs to promote circRNA biogenesis through dimerization and the association with the spliceosome. Required for spermatogenesis via involvement in circRNA biogenesis. Regulates the pre-mRNA processing of ATP5MC1; preventing its degradation. Also binds the poly(A) tail of mRNAs; controlling poly(A) length in neuronal cells. The sequence is that of Zinc finger CCCH domain-containing protein 14 from Homo sapiens (Human).